We begin with the raw amino-acid sequence, 341 residues long: Methionine import ATP-binding protein MetN 1 (341 aa).

The 240-residue stretch at 2 to 241 (IEFKNVNKVF…PQTNTAKNFV (240 aa)) folds into the ABC transporter domain. ATP is bound at residue 38–45 (GYSGAGKS).

It belongs to the ABC transporter superfamily. Methionine importer (TC 3.A.1.24) family. In terms of assembly, the complex is composed of two ATP-binding proteins (MetN), two transmembrane proteins (MetI) and a solute-binding protein (MetQ).

It localises to the cell membrane. The catalysed reaction is L-methionine(out) + ATP + H2O = L-methionine(in) + ADP + phosphate + H(+). It catalyses the reaction D-methionine(out) + ATP + H2O = D-methionine(in) + ADP + phosphate + H(+). In terms of biological role, part of the ABC transporter complex MetNIQ involved in methionine import. Responsible for energy coupling to the transport system. In Staphylococcus epidermidis (strain ATCC 35984 / DSM 28319 / BCRC 17069 / CCUG 31568 / BM 3577 / RP62A), this protein is Methionine import ATP-binding protein MetN 1.